A 323-amino-acid chain; its full sequence is Serine racemase (323 aa).

ATP-binding residues include Ser32, Ser33, and Lys52. The active-site Proton acceptor is Lys57. Lysino-D-alanine (Lys); alternate is present on Lys57. N6-(pyridoxal phosphate)lysine; alternate is present on Lys57. Position 79 (Thr79) interacts with Ca(2+). Residue Ser82 is the Proton acceptor of the active site. Asn84 contacts pyridoxal 5'-phosphate. Residues Gln87 and Tyr119 each coordinate ATP. Residue Asp176 participates in Mg(2+) binding. Gly183, Gly184, Gly185, Gly186, and Leu187 together coordinate pyridoxal 5'-phosphate. Residues Glu208, Gly212, and Asp214 each contribute to the Ca(2+) site. The Mg(2+) site is built by Glu208, Gly212, and Asp214. Positions 208, 212, and 214 each coordinate Mn(2+). Lys277 provides a ligand contact to ATP. Ser308 is a pyridoxal 5'-phosphate binding site. Residue Asn311 coordinates ATP.

The protein belongs to the serine/threonine dehydratase family. As to quaternary structure, homodimer. Requires Mg(2+) as cofactor. It depends on Mn(2+) as a cofactor. The cofactor is Ca(2+). Pyridoxal 5'-phosphate serves as cofactor. Post-translationally, modification of the active site Lys by its substrate Ser to lysino-D-alanine reduces but does not abolish enzyme activity.

It carries out the reaction L-serine = D-serine. The catalysed reaction is L-serine = pyruvate + NH4(+). The enzyme catalyses D-serine = pyruvate + NH4(+). With respect to regulation, allosterically activated by ATP, by magnesium, and possibly also by other divalent metal cations. In terms of biological role, catalyzes the synthesis of D-serine from L-serine. Has dehydratase activity towards both L-serine and D-serine. In Schizosaccharomyces pombe (strain 972 / ATCC 24843) (Fission yeast), this protein is Serine racemase.